We begin with the raw amino-acid sequence, 123 residues long: Ribonuclease P protein component (123 aa).

This sequence belongs to the RnpA family. Consists of a catalytic RNA component (M1 or rnpB) and a protein subunit.

It carries out the reaction Endonucleolytic cleavage of RNA, removing 5'-extranucleotides from tRNA precursor.. Functionally, RNaseP catalyzes the removal of the 5'-leader sequence from pre-tRNA to produce the mature 5'-terminus. It can also cleave other RNA substrates such as 4.5S RNA. The protein component plays an auxiliary but essential role in vivo by binding to the 5'-leader sequence and broadening the substrate specificity of the ribozyme. The protein is Ribonuclease P protein component of Bordetella petrii (strain ATCC BAA-461 / DSM 12804 / CCUG 43448).